Consider the following 297-residue polypeptide: Light-independent protochlorophyllide reductase iron-sulfur ATP-binding protein (297 aa).

ATP contacts are provided by residues 41–46 (GIGKST) and lysine 70. Mg(2+) is bound at residue serine 45. 2 residues coordinate [4Fe-4S] cluster: cysteine 126 and cysteine 160. ATP-binding positions include 211-212 (NR) and 235-237 (PDL).

It belongs to the NifH/BchL/ChlL family. As to quaternary structure, homodimer. Protochlorophyllide reductase is composed of three subunits; BchL, BchN and BchB. [4Fe-4S] cluster is required as a cofactor.

It carries out the reaction chlorophyllide a + oxidized 2[4Fe-4S]-[ferredoxin] + 2 ADP + 2 phosphate = protochlorophyllide a + reduced 2[4Fe-4S]-[ferredoxin] + 2 ATP + 2 H2O. It participates in porphyrin-containing compound metabolism; bacteriochlorophyll biosynthesis (light-independent). Component of the dark-operative protochlorophyllide reductase (DPOR) that uses Mg-ATP and reduced ferredoxin to reduce ring D of protochlorophyllide (Pchlide) to form chlorophyllide a (Chlide). This reaction is light-independent. The L component serves as a unique electron donor to the NB-component of the complex, and binds Mg-ATP. The polypeptide is Light-independent protochlorophyllide reductase iron-sulfur ATP-binding protein (Methylorubrum extorquens (strain CM4 / NCIMB 13688) (Methylobacterium extorquens)).